Reading from the N-terminus, the 514-residue chain is Protein farnesyltransferase subunit beta (514 aa).

Residues 1-13 show a composition bias toward basic residues; the sequence is MRHHTKNLRRRAI. The tract at residues 1–56 is disordered; the sequence is MRHHTKNLRRRAIFLRTTPRGNMDSSSSVATSTSSSSNHRLVRSSEGSPSAGGDDI. A compositionally biased stretch (low complexity) spans 25–39; it reads SSSSVATSTSSSSNH. 5 PFTB repeats span residues 180-221, 231-272, 293-334, 346-388, and 410-454; these read AESL…AVVG, RRAL…SLLN, FTGL…SLLG, IERL…PLIE, and REGL…SSAQ. (2E,6E)-farnesyl diphosphate is bound by residues 319-322 and 367-370; these read HGAY and RTNK. Zn(2+)-binding residues include Asp373 and Cys375. 376–379 is a binding site for (2E,6E)-farnesyl diphosphate; it reads YSHW. His442 lines the Zn(2+) pocket.

This sequence belongs to the protein prenyltransferase subunit beta family. Heterodimer of an alpha and a beta subunit. Interacts with RAS1 and RAS2. Zn(2+) serves as cofactor. As to expression, highly expressed in mycelium, conidium, conidial germination, early formed appressorium and the late infection hypha.

The protein localises to the cytoplasm. It catalyses the reaction L-cysteinyl-[protein] + (2E,6E)-farnesyl diphosphate = S-(2E,6E)-farnesyl-L-cysteinyl-[protein] + diphosphate. Functionally, catalyzes the transfer of a farnesyl moiety from farnesyl diphosphate to a cysteine at the fourth position from the C-terminus of several proteins having the C-terminal sequence Cys-aliphatic-aliphatic-X. The beta subunit is responsible for peptide-binding. In Pyricularia oryzae (strain 70-15 / ATCC MYA-4617 / FGSC 8958) (Rice blast fungus), this protein is Protein farnesyltransferase subunit beta (RAM1).